The following is a 112-amino-acid chain: SPbeta prophage-derived uncharacterized protein YoqB (112 aa).

This chain is SPbeta prophage-derived uncharacterized protein YoqB (yoqB), found in Bacillus subtilis (strain 168).